A 372-amino-acid chain; its full sequence is Lipoyl synthase (372 aa).

[4Fe-4S] cluster is bound by residues Cys-37, Cys-42, Cys-48, Cys-63, Cys-67, Cys-70, and Ser-292. One can recognise a Radical SAM core domain in the interval 49–281; the sequence is WREGTATVML…ERAALEMGFL (233 aa). Positions 338–372 are disordered; it reads LTAELDPDEPRPPVAPAPASASPARLVPAASLIRR. Low complexity predominate over residues 354–372; sequence APASASPARLVPAASLIRR.

The protein belongs to the radical SAM superfamily. Lipoyl synthase family. [4Fe-4S] cluster is required as a cofactor.

It localises to the cytoplasm. The catalysed reaction is [[Fe-S] cluster scaffold protein carrying a second [4Fe-4S](2+) cluster] + N(6)-octanoyl-L-lysyl-[protein] + 2 oxidized [2Fe-2S]-[ferredoxin] + 2 S-adenosyl-L-methionine + 4 H(+) = [[Fe-S] cluster scaffold protein] + N(6)-[(R)-dihydrolipoyl]-L-lysyl-[protein] + 4 Fe(3+) + 2 hydrogen sulfide + 2 5'-deoxyadenosine + 2 L-methionine + 2 reduced [2Fe-2S]-[ferredoxin]. It participates in protein modification; protein lipoylation via endogenous pathway; protein N(6)-(lipoyl)lysine from octanoyl-[acyl-carrier-protein]: step 2/2. Functionally, catalyzes the radical-mediated insertion of two sulfur atoms into the C-6 and C-8 positions of the octanoyl moiety bound to the lipoyl domains of lipoate-dependent enzymes, thereby converting the octanoylated domains into lipoylated derivatives. The chain is Lipoyl synthase from Sorangium cellulosum (strain So ce56) (Polyangium cellulosum (strain So ce56)).